A 407-amino-acid chain; its full sequence is Probable protein S-acyltransferase 9 (407 aa).

A run of 2 helical transmembrane segments spans residues 28-48 (WSIP…SVFV) and 62-82 (GHVF…LLFL). A DHHC domain is found at 136-179 (KYCDTCMLYRPPRCSHCSICNNCVERFDHHCPWRNYRYFFMFVS). Cys166 functions as the S-palmitoyl cysteine intermediate in the catalytic mechanism. 2 consecutive transmembrane segments (helical) span residues 174–194 (FFMF…MSAL) and 217–237 (AVML…LTGF). The segment at 300–407 (LATTWERPEE…RSYAAAEEGR (108 aa)) is disordered. The segment covering 346–356 (DTAHHKIDIDQ) has biased composition (basic and acidic residues).

The protein belongs to the DHHC palmitoyltransferase family. As to expression, mainly expressed in seeds.

It is found in the cell membrane. The catalysed reaction is L-cysteinyl-[protein] + hexadecanoyl-CoA = S-hexadecanoyl-L-cysteinyl-[protein] + CoA. Functionally, palmitoyl acyltransferase. The sequence is that of Probable protein S-acyltransferase 9 (PAT09) from Arabidopsis thaliana (Mouse-ear cress).